We begin with the raw amino-acid sequence, 940 residues long: Translation initiation factor IF-2 (940 aa).

2 stretches are compositionally biased toward low complexity: residues 138-147 and 161-208; these read APVEVVAEPE and PVVV…ITEL. A disordered region spans residues 138–354; that stretch reads APVEVVAEPE…DRQTFQAPTE (217 aa). Composition is skewed to basic and acidic residues over residues 214–271 and 289–311; these read IAAR…EEAA and AKAD…DGAK. The 170-residue stretch at 440–609 folds into the tr-type G domain; it reads PRAPVVTVMG…LLQAEVLELT (170 aa). The G1 stretch occupies residues 449–456; the sequence is GHVDHGKT. Residue 449-456 coordinates GTP; the sequence is GHVDHGKT. A G2 region spans residues 474 to 478; sequence GITQH. The G3 stretch occupies residues 495 to 498; it reads DTPG. Residues 495–499 and 549–552 each bind GTP; these read DTPGH and TKID. A G4 region spans residues 549–552; the sequence is TKID. A G5 region spans residues 585-587; the sequence is SAK.

The protein belongs to the TRAFAC class translation factor GTPase superfamily. Classic translation factor GTPase family. IF-2 subfamily.

The protein localises to the cytoplasm. Its function is as follows. One of the essential components for the initiation of protein synthesis. Protects formylmethionyl-tRNA from spontaneous hydrolysis and promotes its binding to the 30S ribosomal subunits. Also involved in the hydrolysis of GTP during the formation of the 70S ribosomal complex. The protein is Translation initiation factor IF-2 of Azoarcus sp. (strain BH72).